The primary structure comprises 116 residues: Protein Rev (116 aa).

Position 5 is a phosphoserine; by host CK2 (Ser-5). The interval 18–26 is homomultimerization; the sequence is LIKILYQSN. A disordered region spans residues 23 to 49; that stretch reads YQSNPPPSPEGTRQARRNRRRRWRARQ. A Nuclear localization signal and RNA-binding (RRE) motif is present at residues 34–50; it reads TRQARRNRRRRWRARQR. The span at 36 to 49 shows a compositional bias: basic residues; sequence QARRNRRRRWRARQ. A Nuclear export signal and binding to XPO1 motif is present at residues 73-84; the sequence is LQLPPLERLNLN. Residues 86–116 are disordered; that stretch reads SEDCGTSGTQGVGSPQISVESPTVLESGTEE. A phosphoserine; by host mark is found at Ser-92 and Ser-99.

It belongs to the HIV-1 REV protein family. Homomultimer; when bound to the RRE. Multimeric assembly is essential for activity and may involve XPO1. Binds to human KPNB1, XPO1, TNPO1, RANBP5 and IPO7. Interacts with the viral Integrase. Interacts with human KHDRBS1. Interacts with human NAP1; this interaction decreases Rev multimerization and stimulates its activity. Interacts with human DEAD-box helicases DDX3 and DDX24; these interactions may serve for viral RNA export to the cytoplasm and packaging, respectively. Interacts with human PSIP1; this interaction may inhibit HIV-1 DNA integration by promoting dissociation of the Integrase-LEDGF/p75 complex. Post-translationally, asymmetrically arginine dimethylated at one site by host PRMT6. Methylation impairs the RNA-binding activity and export of viral RNA from the nucleus to the cytoplasm. In terms of processing, phosphorylated by protein kinase CK2. Presence of, and maybe binding to the N-terminus of the regulatory beta subunit of CK2 is necessary for CK2-mediated Rev's phosphorylation.

It localises to the host nucleus. The protein resides in the host nucleolus. Its subcellular location is the host cytoplasm. Its function is as follows. Escorts unspliced or incompletely spliced viral pre-mRNAs (late transcripts) out of the nucleus of infected cells. These pre-mRNAs carry a recognition sequence called Rev responsive element (RRE) located in the env gene, that is not present in fully spliced viral mRNAs (early transcripts). This function is essential since most viral proteins are translated from unspliced or partially spliced pre-mRNAs which cannot exit the nucleus by the pathway used by fully processed cellular mRNAs. Rev itself is translated from a fully spliced mRNA that readily exits the nucleus. Rev's nuclear localization signal (NLS) binds directly to KPNB1/Importin beta-1 without previous binding to KPNA1/Importin alpha-1. KPNB1 binds to the GDP bound form of RAN (Ran-GDP) and targets Rev to the nucleus. In the nucleus, the conversion from Ran-GDP to Ran-GTP dissociates Rev from KPNB1 and allows Rev's binding to the RRE in viral pre-mRNAs. Rev multimerization on the RRE via cooperative assembly exposes its nuclear export signal (NES) to the surface. Rev can then form a complex with XPO1/CRM1 and Ran-GTP, leading to nuclear export of the complex. Conversion from Ran-GTP to Ran-GDP mediates dissociation of the Rev/RRE/XPO1/RAN complex, so that Rev can return to the nucleus for a subsequent round of export. Beside KPNB1, also seems to interact with TNPO1/Transportin-1, RANBP5/IPO5 and IPO7/RANBP7 for nuclear import. The nucleoporin-like HRB/RIP is an essential cofactor that probably indirectly interacts with Rev to release HIV RNAs from the perinuclear region to the cytoplasm. In Homo sapiens (Human), this protein is Protein Rev.